Here is a 67-residue protein sequence, read N- to C-terminus: Conotoxin TsMMSK-B021 (67 aa).

A signal peptide spans 1–20; that stretch reads MMSKLGVLLTICLLLFPLTA. Positions 21-50 are excised as a propeptide; sequence VQLDGDQPADLPELRAQDFAPERSPWFDPV. Cystine bridges form between Cys-53-Cys-65, Cys-54-Cys-61, and Cys-58-Cys-64. Position 63 is a 4-hydroxyproline (Pro-63).

Belongs to the conotoxin M superfamily. As to expression, expressed by the venom duct.

The protein localises to the secreted. The chain is Conotoxin TsMMSK-B021 from Conus tessulatus (Tessellate cone).